The chain runs to 332 residues: Glycerol-3-phosphate dehydrogenase [NAD(P)+] (332 aa).

Residues W13, R33, and K105 each contribute to the NADPH site. 3 residues coordinate sn-glycerol 3-phosphate: K105, G134, and S136. A138 is a binding site for NADPH. Positions 189, 242, 252, 253, and 254 each coordinate sn-glycerol 3-phosphate. K189 functions as the Proton acceptor in the catalytic mechanism. An NADPH-binding site is contributed by R253. An NADPH-binding site is contributed by E279.

It belongs to the NAD-dependent glycerol-3-phosphate dehydrogenase family.

The protein localises to the cytoplasm. It carries out the reaction sn-glycerol 3-phosphate + NAD(+) = dihydroxyacetone phosphate + NADH + H(+). The catalysed reaction is sn-glycerol 3-phosphate + NADP(+) = dihydroxyacetone phosphate + NADPH + H(+). Its pathway is membrane lipid metabolism; glycerophospholipid metabolism. Its function is as follows. Catalyzes the reduction of the glycolytic intermediate dihydroxyacetone phosphate (DHAP) to sn-glycerol 3-phosphate (G3P), the key precursor for phospholipid synthesis. In Halorhodospira halophila (strain DSM 244 / SL1) (Ectothiorhodospira halophila (strain DSM 244 / SL1)), this protein is Glycerol-3-phosphate dehydrogenase [NAD(P)+].